The primary structure comprises 305 residues: Tyrosine recombinase XerD (305 aa).

The 86-residue stretch at 9–94 (MQDFGYVEQF…AIRRLFQYLH (86 aa)) folds into the Core-binding (CB) domain. Residues 115-299 (RLPKDISEEQ…ATERLKQIHS (185 aa)) enclose the Tyr recombinase domain. Active-site residues include Arg-155, Lys-179, His-251, Arg-254, and His-277. Residue Tyr-286 is the O-(3'-phospho-DNA)-tyrosine intermediate of the active site.

The protein belongs to the 'phage' integrase family. XerD subfamily. In terms of assembly, forms a cyclic heterotetrameric complex composed of two molecules of XerC and two molecules of XerD.

The protein resides in the cytoplasm. Site-specific tyrosine recombinase, which acts by catalyzing the cutting and rejoining of the recombining DNA molecules. The XerC-XerD complex is essential to convert dimers of the bacterial chromosome into monomers to permit their segregation at cell division. It also contributes to the segregational stability of plasmids. The protein is Tyrosine recombinase XerD of Vibrio vulnificus (strain CMCP6).